Here is a 292-residue protein sequence, read N- to C-terminus: 2-(5''-triphosphoribosyl)-3'-dephosphocoenzyme-A synthase (292 aa).

The protein belongs to the CitG/MdcB family.

The enzyme catalyses 3'-dephospho-CoA + ATP = 2'-(5''-triphospho-alpha-D-ribosyl)-3'-dephospho-CoA + adenine. Its function is as follows. Catalyzes the formation of 2-(5''-triphosphoribosyl)-3'-dephosphocoenzyme-A, the precursor of the prosthetic group of the holo-acyl carrier protein (gamma chain) of citrate lyase, from ATP and dephospho-CoA. The chain is 2-(5''-triphosphoribosyl)-3'-dephosphocoenzyme-A synthase from Escherichia coli (strain SMS-3-5 / SECEC).